The sequence spans 359 residues: 3-dehydroquinate synthase (359 aa).

NAD(+) contacts are provided by residues 71–76 (DGEQHK), 105–109 (GVIGD), 129–130 (TT), Lys-142, and Lys-151. Zn(2+) contacts are provided by Glu-184, His-247, and His-264.

It belongs to the sugar phosphate cyclases superfamily. Dehydroquinate synthase family. NAD(+) is required as a cofactor. Co(2+) serves as cofactor. It depends on Zn(2+) as a cofactor.

The protein localises to the cytoplasm. The catalysed reaction is 7-phospho-2-dehydro-3-deoxy-D-arabino-heptonate = 3-dehydroquinate + phosphate. It functions in the pathway metabolic intermediate biosynthesis; chorismate biosynthesis; chorismate from D-erythrose 4-phosphate and phosphoenolpyruvate: step 2/7. Functionally, catalyzes the conversion of 3-deoxy-D-arabino-heptulosonate 7-phosphate (DAHP) to dehydroquinate (DHQ). The chain is 3-dehydroquinate synthase from Chromobacterium violaceum (strain ATCC 12472 / DSM 30191 / JCM 1249 / CCUG 213 / NBRC 12614 / NCIMB 9131 / NCTC 9757 / MK).